We begin with the raw amino-acid sequence, 136 residues long: NADPH-dependent 7-cyano-7-deazaguanine reductase (136 aa).

Cys-53 (thioimide intermediate) is an active-site residue. Asp-60 functions as the Proton donor in the catalytic mechanism. Residues 75–77 (VEL) and 94–95 (HE) each bind substrate.

The protein belongs to the GTP cyclohydrolase I family. QueF type 1 subfamily.

It is found in the cytoplasm. The enzyme catalyses 7-aminomethyl-7-carbaguanine + 2 NADP(+) = 7-cyano-7-deazaguanine + 2 NADPH + 3 H(+). The protein operates within tRNA modification; tRNA-queuosine biosynthesis. In terms of biological role, catalyzes the NADPH-dependent reduction of 7-cyano-7-deazaguanine (preQ0) to 7-aminomethyl-7-deazaguanine (preQ1). The chain is NADPH-dependent 7-cyano-7-deazaguanine reductase from Trichormus variabilis (strain ATCC 29413 / PCC 7937) (Anabaena variabilis).